Reading from the N-terminus, the 346-residue chain is HLA class I histocompatibility antigen, alpha chain F (346 aa).

The N-terminal stretch at 1–21 is a signal peptide; sequence MAPRSLLLLLSGALALTDTWA. The tract at residues 22 to 111 is alpha-1; the sequence is GSHSLRYFST…LLRRYNQSEA (90 aa). At 22 to 305 the chain is on the extracellular side; it reads GSHSLRYFST…EQSPQPTIPI (284 aa). A peptide antigen is bound by residues asparagine 91 and arginine 105. Asparagine 107 carries an N-linked (GlcNAc...) asparagine glycan. Residues 112-203 form an alpha-2 region; it reads GSHTLQGMNG…ENGKETLQRA (92 aa). Disulfide bonds link cysteine 122/cysteine 185 and cysteine 224/cysteine 280. Residues threonine 164, tyrosine 168, and glutamate 176 each contribute to the a peptide antigen site. Residues 204 to 295 are alpha-3; sequence DPPKAHVAHH…GLPQPLILRW (92 aa). The region spanning 206–296 is the Ig-like C1-type domain; it reads PKAHVAHHPI…LPQPLILRWE (91 aa). The segment at 296-305 is connecting peptide; the sequence is EQSPQPTIPI. The chain crosses the membrane as a helical span at residues 306–329; the sequence is VGIVAGLVVLGAVVTGAVVAAVMW. Over 330-346 the chain is Cytoplasmic; the sequence is RKKSSDRNRGSYSQAAV. The short motif at 336–338 is the Sorting signal sequence; Golgi-retention signal; ER-retention signal element; sequence RNR.

Belongs to the MHC class I family. As to quaternary structure, forms a heterotrimer with B2M and a self-peptide. Binds a diverse number of peptides ranging from 7 to more than 30 amino acids. Peptide-bound HLA-F-B2M interacts with LILRB1 and LILRB2 but not with KIR3DS1 or KIR3DL2; this interaction is direct. The OC form interacts with KIR3DS1, KIR2DS4 and KIR3DL2; this interaction is direct. Interacts with TAP1-TAP2 complex and CALR; this interaction is required for appropriate folding and peptide loading. Interacts with the coat protein complex II and 14-3-3 proteins; these interactions likely control the anterograde ER-to-Golgi transport of HLA-F. HLA-F-B2M complex interacts with the heavy chain of other MHC class I molecules including HLA-A and HLA-E; this interaction may regulate the intracellular trafficking and the stability of peptide-free MHC class I OCs. In terms of processing, N-glycosylated. In terms of tissue distribution, expressed in resting B cells (at protein level). Expressed in secondary lymphoid organs rich in B and T cells such as the tonsils, spleen, and thymus (at protein level). Expressed in the endothelial cells of the tonsils. Expressed on activated lymphoid cells including B cells, NK cells, CD4+ T cells and memory T cells (at protein level). Expressed in motor neurons of spinal cord.

It is found in the cell membrane. Its subcellular location is the early endosome membrane. It localises to the lysosome membrane. Non-classical major histocompatibility class Ib molecule postulated to play a role in immune surveillance, immune tolerance and inflammation. Functions in two forms, as a heterotrimeric complex with B2M/beta-2 microglobulin and a peptide (peptide-bound HLA-F-B2M) and as an open conformer (OC) devoid of peptide and B2M (peptide-free OC). In complex with B2M, presents non-canonical self-peptides carrying post-translational modifications, particularly phosphorylated self-peptides. Peptide-bound HLA-F-B2M acts as a ligand for LILRB1 inhibitory receptor, a major player in maternal-fetal tolerance. Peptide-free OC acts as a ligand for KIR3DS1 and KIR3DL2 receptors. Upon interaction with activating KIR3DS1 receptor on NK cells, triggers NK cell degranulation and anti-viral cytokine production. Through interaction with KIR3DL2 receptor, inhibits NK and T cell effector functions. May interact with other MHC class I OCs to cross-present exogenous viral, tumor or minor histompatibility antigens to cytotoxic CD8+ T cells, triggering effector and memory responses. May play a role in inflammatory responses in the peripheral nervous system. Through interaction with KIR3DL2, may protect motor neurons from astrocyte-induced toxicity. The protein is HLA class I histocompatibility antigen, alpha chain F of Homo sapiens (Human).